A 278-amino-acid chain; its full sequence is Urease accessory protein UreD 1 (278 aa).

The protein belongs to the UreD family. UreD, UreF and UreG form a complex that acts as a GTP-hydrolysis-dependent molecular chaperone, activating the urease apoprotein by helping to assemble the nickel containing metallocenter of UreC. The UreE protein probably delivers the nickel.

The protein resides in the cytoplasm. In terms of biological role, required for maturation of urease via the functional incorporation of the urease nickel metallocenter. The sequence is that of Urease accessory protein UreD 1 from Bradyrhizobium sp. (strain ORS 278).